The following is a 167-amino-acid chain: NAD(P)H-quinone oxidoreductase subunit I, chloroplastic (167 aa).

4Fe-4S ferredoxin-type domains lie at 55-84 (GRIH…VDWI) and 95-124 (KNYS…MTEE). The [4Fe-4S] cluster site is built by Cys-64, Cys-67, Cys-70, Cys-74, Cys-104, Cys-107, Cys-110, and Cys-114.

It belongs to the complex I 23 kDa subunit family. As to quaternary structure, NDH is composed of at least 16 different subunits, 5 of which are encoded in the nucleus. It depends on [4Fe-4S] cluster as a cofactor.

Its subcellular location is the plastid. It localises to the chloroplast thylakoid membrane. The catalysed reaction is a plastoquinone + NADH + (n+1) H(+)(in) = a plastoquinol + NAD(+) + n H(+)(out). It carries out the reaction a plastoquinone + NADPH + (n+1) H(+)(in) = a plastoquinol + NADP(+) + n H(+)(out). Functionally, NDH shuttles electrons from NAD(P)H:plastoquinone, via FMN and iron-sulfur (Fe-S) centers, to quinones in the photosynthetic chain and possibly in a chloroplast respiratory chain. The immediate electron acceptor for the enzyme in this species is believed to be plastoquinone. Couples the redox reaction to proton translocation, and thus conserves the redox energy in a proton gradient. The chain is NAD(P)H-quinone oxidoreductase subunit I, chloroplastic from Adiantum capillus-veneris (Maidenhair fern).